A 67-amino-acid chain; its full sequence is Penaeidin-4c (67 aa).

The N-terminal stretch at 1–19 (MRLVVCLVFLASFALVCQG) is a signal peptide. Disulfide bonds link Cys-42–Cys-56, Cys-45–Cys-63, and Cys-57–Cys-64. Arg-66 carries the arginine amide modification.

It belongs to the penaeidin family.

The protein resides in the cytoplasmic granule. Its function is as follows. Antibacterial and antifungal activity. Presents chitin-binding activity. This chain is Penaeidin-4c, found in Penaeus vannamei (Whiteleg shrimp).